We begin with the raw amino-acid sequence, 259 residues long: Protein unc-50 homolog (259 aa).

The residue at position 1 (Met-1) is an N-acetylmethionine. Over residues 1–17 the composition is skewed to polar residues; the sequence is MLPSTSVNSPAQGNGVL. Positions 1 to 22 are disordered; sequence MLPSTSVNSPAQGNGVLSSRDA. Residues 1–82 are Cytoplasmic-facing; that stretch reads MLPSTSVNSP…TKDQWARDDP (82 aa). Phosphoserine is present on Ser-6. The chain crosses the membrane as a helical span at residues 83-103; that stretch reads AFLVLLSIWLCVSTIGFGFVL. The Lumenal segment spans residues 104–115; sequence DMGFFETIKLLL. Residues 116-136 form a helical membrane-spanning segment; it reads WVVFIDCVGVGLLISTLMWFI. Over 137–163 the chain is Cytoplasmic; the sequence is SNKYLVKRQSRDYDVEWGYAFDVHLNA. The helical transmembrane segment at 164–184 threads the bilayer; it reads FYPLLVILHFIQLFFINHVIL. Over 185 to 187 the chain is Lumenal; that stretch reads TDT. The helical transmembrane segment at 188–208 threads the bilayer; it reads FIGYLVGNTLWLVAVGYYIYV. The Cytoplasmic portion of the chain corresponds to 209–222; it reads TFLGYSALPFLKNT. The chain crosses the membrane as a helical span at residues 223 to 243; that stretch reads VILLYPFAPLILLYGLSLALG. Over 244 to 259 the chain is Lumenal; it reads WNFTHTLCSFYKYRVK.

It belongs to the unc-50 family.

It is found in the nucleus inner membrane. Its subcellular location is the golgi apparatus membrane. Its function is as follows. Involved in the cell surface expression of neuronal nicotinic receptors. Binds RNA. This is Protein unc-50 homolog (UNC50) from Bos taurus (Bovine).